We begin with the raw amino-acid sequence, 170 residues long: CASP-like protein 1F1 (170 aa).

Over 1–16 (MMGDNEGRRTPLLNLG) the chain is Cytoplasmic. A helical membrane pass occupies residues 17-37 (VQVSMRVLTIGAAMASMWVMI). Residues 38 to 62 (TNREVASVYGIAFEAKYSYSSAFRY) lie on the Extracellular side of the membrane. A helical transmembrane segment spans residues 63-83 (LVYAQIAVCAATLFTLVWACL). Residues 84-88 (AVRRR) lie on the Cytoplasmic side of the membrane. The helical transmembrane segment at 89–109 (GLVFALFFFDLLTTLTAISAF) threads the bilayer. Residues 110-141 (SAAFAEGYVGKYGNKQAGWLPICGYVHGYCSR) lie on the Extracellular side of the membrane. A helical membrane pass occupies residues 142–162 (VTISLAMSFASFILLFILTVL). Topologically, residues 163–170 (TASAARHY) are cytoplasmic.

It belongs to the Casparian strip membrane proteins (CASP) family. As to quaternary structure, homodimer and heterodimers. In terms of tissue distribution, in flowers, expressed in the anther wall.

The protein resides in the cell membrane. The polypeptide is CASP-like protein 1F1 (Arabidopsis thaliana (Mouse-ear cress)).